A 380-amino-acid chain; its full sequence is Cytochrome b (380 aa).

The next 4 helical transmembrane spans lie at F33–M53, W77–I98, W113–L133, and F178–L198. The heme b site is built by H83 and H97. Heme b contacts are provided by H182 and H196. H201 is a binding site for a ubiquinone. 4 consecutive transmembrane segments (helical) span residues Y226–A246, L288–H308, L320–G340, and F347–P367.

The protein belongs to the cytochrome b family. As to quaternary structure, the cytochrome bc1 complex contains 3 respiratory subunits (MT-CYB, CYC1 and UQCRFS1), 2 core proteins (UQCRC1 and UQCRC2) and probably 6 low-molecular weight proteins. The cofactor is heme b.

The protein localises to the mitochondrion inner membrane. Component of the ubiquinol-cytochrome c reductase complex (complex III or cytochrome b-c1 complex) that is part of the mitochondrial respiratory chain. The b-c1 complex mediates electron transfer from ubiquinol to cytochrome c. Contributes to the generation of a proton gradient across the mitochondrial membrane that is then used for ATP synthesis. This Oncorhynchus mykiss (Rainbow trout) protein is Cytochrome b (mt-cyb).